The following is a 223-amino-acid chain: UPF0758 protein Plut_0598 (223 aa).

The MPN domain maps to 100-222; sequence RVQGAKDVFE…WFSFRESNLL (123 aa). His171, His173, and Asp184 together coordinate Zn(2+). The JAMM motif signature appears at 171 to 184; the sequence is HNHPSGDTEPSNAD.

The protein belongs to the UPF0758 family.

In Chlorobium luteolum (strain DSM 273 / BCRC 81028 / 2530) (Pelodictyon luteolum), this protein is UPF0758 protein Plut_0598.